We begin with the raw amino-acid sequence, 236 residues long: Leucyl/phenylalanyl-tRNA--protein transferase (236 aa).

Belongs to the L/F-transferase family.

It localises to the cytoplasm. It catalyses the reaction N-terminal L-lysyl-[protein] + L-leucyl-tRNA(Leu) = N-terminal L-leucyl-L-lysyl-[protein] + tRNA(Leu) + H(+). The catalysed reaction is N-terminal L-arginyl-[protein] + L-leucyl-tRNA(Leu) = N-terminal L-leucyl-L-arginyl-[protein] + tRNA(Leu) + H(+). It carries out the reaction L-phenylalanyl-tRNA(Phe) + an N-terminal L-alpha-aminoacyl-[protein] = an N-terminal L-phenylalanyl-L-alpha-aminoacyl-[protein] + tRNA(Phe). Functionally, functions in the N-end rule pathway of protein degradation where it conjugates Leu, Phe and, less efficiently, Met from aminoacyl-tRNAs to the N-termini of proteins containing an N-terminal arginine or lysine. The sequence is that of Leucyl/phenylalanyl-tRNA--protein transferase from Shewanella halifaxensis (strain HAW-EB4).